The sequence spans 756 residues: Lysyl oxidase homolog 4 (756 aa).

Residues 1–24 (MAWSPPATLFLFLLLLGQPPPSRP) form the signal peptide. 4 consecutive SRCR domains span residues 32–133 (LRLV…VICH), 159–287 (VRLK…VSCV), 311–411 (VRLR…VRCN), and 421–529 (VRLA…VSCM). 17 cysteine pairs are disulfide-bonded: cysteine 58/cysteine 122, cysteine 71/cysteine 132, cysteine 102/cysteine 112, cysteine 191/cysteine 276, cysteine 204/cysteine 286, cysteine 251/cysteine 261, cysteine 336/cysteine 400, cysteine 349/cysteine 410, cysteine 380/cysteine 390, cysteine 450/cysteine 515, cysteine 463/cysteine 528, cysteine 497/cysteine 507, cysteine 558/cysteine 564, cysteine 610/cysteine 658, cysteine 642/cysteine 648, cysteine 670/cysteine 680, and cysteine 717/cysteine 731. A glycan (N-linked (GlcNAc...) asparagine) is linked at asparagine 198. Positions 533–736 (PDLVMNAQLV…WLHNCHTGNS (204 aa)) are lysyl-oxidase like. Residues histidine 611, histidine 613, and histidine 615 each contribute to the Cu cation site. The N-linked (GlcNAc...) asparagine glycan is linked to asparagine 629. Residues 638-674 (KASFCLEDTNCPTGLQRRYACANFGEQGVTVGCWDTY) constitute a cross-link (lysine tyrosylquinone (Lys-Tyr)). Tyrosine 674 bears the 2',4',5'-topaquinone mark.

This sequence belongs to the lysyl oxidase family. The cofactor is Cu cation. Lysine tyrosylquinone residue is required as a cofactor. In terms of processing, the lysine tyrosylquinone cross-link (LTQ) is generated by condensation of the epsilon-amino group of a lysine with a topaquinone produced by oxidation of tyrosine. Post-translationally, may be proteolytically cleaved by BMP1. As to expression, expressed in many tissues, the highest levels among the tissues studied being in the skeletal muscle, testis and pancreas. Expressed in cartilage.

It localises to the secreted. The protein localises to the extracellular space. The enzyme catalyses L-lysyl-[protein] + O2 + H2O = (S)-2-amino-6-oxohexanoyl-[protein] + H2O2 + NH4(+). With respect to regulation, inhibited by beta-aminopropionitrile (BAPN). Its function is as follows. Catalyzes the oxidative deamination of lysine and hydroxylysine residues in collagen and elastin, resulting in the formation of covalent cross-linkages, and the stabilization of collagen and elastin fibers. In Homo sapiens (Human), this protein is Lysyl oxidase homolog 4 (LOXL4).